A 556-amino-acid chain; its full sequence is Glutamine--tRNA ligase (556 aa).

Positions 34 to 44 match the 'HIGH' region motif; sequence PEPNGYLHIGH. ATP-binding positions include 35 to 37 and 41 to 47; these read EPN and HIGHAKS. Aspartate 67 and tyrosine 212 together coordinate L-glutamine. ATP is bound by residues threonine 231, 263–264, and 271–273; these read RL and MSK. The 'KMSKS' region signature appears at 270–274; sequence VMSKR.

Belongs to the class-I aminoacyl-tRNA synthetase family. Monomer.

The protein localises to the cytoplasm. The catalysed reaction is tRNA(Gln) + L-glutamine + ATP = L-glutaminyl-tRNA(Gln) + AMP + diphosphate. This chain is Glutamine--tRNA ligase, found in Nitrosomonas europaea (strain ATCC 19718 / CIP 103999 / KCTC 2705 / NBRC 14298).